A 246-amino-acid polypeptide reads, in one-letter code: Acetoacetate decarboxylase (246 aa).

Catalysis depends on K116, which acts as the Schiff-base intermediate with acetoacetate.

Belongs to the ADC family.

It catalyses the reaction acetoacetate + H(+) = acetone + CO2. Functionally, catalyzes the conversion of acetoacetate to acetone and carbon dioxide. In Burkholderia lata (strain ATCC 17760 / DSM 23089 / LMG 22485 / NCIMB 9086 / R18194 / 383), this protein is Acetoacetate decarboxylase.